The following is a 461-amino-acid chain: V-type ATP synthase beta chain (461 aa).

Belongs to the ATPase alpha/beta chains family.

In terms of biological role, produces ATP from ADP in the presence of a proton gradient across the membrane. The V-type beta chain is a regulatory subunit. The protein is V-type ATP synthase beta chain of Clostridium botulinum (strain Kyoto / Type A2).